The primary structure comprises 33 residues: Translocation protein SEC63 homolog (33 aa).

As to quaternary structure, the ER translocon complex consists of channel-forming core components SEC61A1, SEC61B and SEC61G and different auxiliary components such as SEC62 and SEC63. Pancreas.

Its subcellular location is the endoplasmic reticulum membrane. In terms of biological role, mediates cotranslational and post-translational transport of certain precursor polypeptides across endoplasmic reticulum (ER). Proposed to play an auxiliary role in recognition of precursors with short and apolar signal peptides. May cooperate with SEC62 and HSPA5/BiP to facilitate targeting of small presecretory proteins into the SEC61 channel-forming translocon complex, triggering channel opening for polypeptide translocation to the ER lumen. Required for efficient PKD1/Polycystin-1 biogenesis and trafficking to the plasma membrane of the primary cilia. This chain is Translocation protein SEC63 homolog (SEC63), found in Canis lupus familiaris (Dog).